The following is a 620-amino-acid chain: E3 ubiquitin-protein ligase AMFR (620 aa).

7 helical membrane passes run 75–95, 115–135, 138–158, 179–199, 201–221, 247–267, and 269–289; these read LFVW…GKVI, FWNF…VQRV, VVLW…VQLC, VLAL…LCAL, GHIH…LVTV, SSYI…LDLM, and HIHM…VIFM. The RING-type; atypical zinc finger occupies 334 to 372; it reads CAICWDSMTTARKLPCGHLFHNSCLRSWLEQDTSCPTCR. The CUE domain maps to 449–491; that stretch reads QLNGMAHQIQEMFPQVPYHLILQDLQLTRSVEVTTDNILEGRI. Low complexity predominate over residues 510–526; the sequence is ASEDGAGASSGSEVAAP. Disordered regions lie at residues 510–544 and 569–598; these read ASED…SADE and PEDG…DSVT. The segment covering 531-544 has biased composition (basic and acidic residues); the sequence is FEVRGSRFSKSADE. Residues 581-595 show a composition bias toward acidic residues; the sequence is DNDDSVPSIEDEDSD.

In terms of tissue distribution, widely expressed.

The protein resides in the endoplasmic reticulum membrane. It carries out the reaction [E2 ubiquitin-conjugating enzyme]-S-ubiquitinyl-L-cysteine + [acceptor protein]-L-cysteine = [E2 ubiquitin-conjugating enzyme]-L-cysteine + [acceptor protein]-S-ubiquitinyl-L-cysteine.. Its pathway is protein modification; protein ubiquitination. E3 ubiquitin-protein ligase that mediates the polyubiquitination of lysine and cysteine residues on target proteins. May participate in the final step of endoplasmic reticulum-associated degradation (ERAD). Required for proper lipid homeostasis. In Danio rerio (Zebrafish), this protein is E3 ubiquitin-protein ligase AMFR.